The primary structure comprises 129 residues: M-zodatoxin-Lt8c (129 aa).

The signal sequence occupies residues 1–20 (MKYFVVALALVAAFACIAES). Positions 21–60 (KPAESEHELAEVEEENELADLEDAVWLEHLADLSDLEEAR) are excised as a propeptide. The Processing quadruplet motif signature appears at 57 to 60 (EEAR).

Post-translationally, cleavage of the propeptide depends on the processing quadruplet motif (XXXR, with at least one of X being E). As to expression, expressed by the venom gland.

The protein localises to the secreted. Functionally, insecticidal, cytolytic and antimicrobial peptide. Forms voltage-dependent, ion-permeable channels in membranes. At high concentration causes cell membrane lysis. The chain is M-zodatoxin-Lt8c (cit 1-3) from Lachesana tarabaevi (Spider).